A 455-amino-acid chain; its full sequence is Carbamoyl phosphate synthase arginine-specific small chain (455 aa).

A mitochondrion-targeting transit peptide spans M1 to M28. Residues H219–N406 enclose the Glutamine amidotransferase type-1 domain. Catalysis depends on C295, which acts as the Nucleophile. Residues H379 and E381 contribute to the active site.

The protein belongs to the CarA family. Heterodimer composed of 2 chains; the small (or glutamine) chain promotes the hydrolysis of glutamine to ammonia, which is used by the large (or ammonia) chain to synthesize carbamoyl phosphate.

The protein resides in the mitochondrion matrix. The catalysed reaction is hydrogencarbonate + L-glutamine + 2 ATP + H2O = carbamoyl phosphate + L-glutamate + 2 ADP + phosphate + 2 H(+). It catalyses the reaction L-glutamine + H2O = L-glutamate + NH4(+). It functions in the pathway amino-acid biosynthesis; L-arginine biosynthesis; carbamoyl phosphate from bicarbonate: step 1/1. Small subunit of the arginine-specific carbamoyl phosphate synthase (CPSase). CPSase catalyzes the formation of carbamoyl phosphate from the ammonia moiety of glutamine, carbonate, and phosphate donated by ATP, the first step of the arginine biosynthetic pathway. The small subunit (glutamine amidotransferase) binds and cleaves glutamine to supply the large subunit with the substrate ammonia. The polypeptide is Carbamoyl phosphate synthase arginine-specific small chain (cpa1) (Aspergillus clavatus (strain ATCC 1007 / CBS 513.65 / DSM 816 / NCTC 3887 / NRRL 1 / QM 1276 / 107)).